The sequence spans 372 residues: 4-hydroxy-3-methylbut-2-en-1-yl diphosphate synthase (flavodoxin) (372 aa).

Residues Cys270, Cys273, Cys305, and Glu312 each contribute to the [4Fe-4S] cluster site.

The protein belongs to the IspG family. Requires [4Fe-4S] cluster as cofactor.

It catalyses the reaction (2E)-4-hydroxy-3-methylbut-2-enyl diphosphate + oxidized [flavodoxin] + H2O + 2 H(+) = 2-C-methyl-D-erythritol 2,4-cyclic diphosphate + reduced [flavodoxin]. Its pathway is isoprenoid biosynthesis; isopentenyl diphosphate biosynthesis via DXP pathway; isopentenyl diphosphate from 1-deoxy-D-xylulose 5-phosphate: step 5/6. In terms of biological role, converts 2C-methyl-D-erythritol 2,4-cyclodiphosphate (ME-2,4cPP) into 1-hydroxy-2-methyl-2-(E)-butenyl 4-diphosphate. This is 4-hydroxy-3-methylbut-2-en-1-yl diphosphate synthase (flavodoxin) from Alcanivorax borkumensis (strain ATCC 700651 / DSM 11573 / NCIMB 13689 / SK2).